Reading from the N-terminus, the 350-residue chain is Phosphoribosylformylglycinamidine cyclo-ligase (350 aa).

This sequence belongs to the AIR synthase family.

The protein resides in the cytoplasm. It carries out the reaction 2-formamido-N(1)-(5-O-phospho-beta-D-ribosyl)acetamidine + ATP = 5-amino-1-(5-phospho-beta-D-ribosyl)imidazole + ADP + phosphate + H(+). Its pathway is purine metabolism; IMP biosynthesis via de novo pathway; 5-amino-1-(5-phospho-D-ribosyl)imidazole from N(2)-formyl-N(1)-(5-phospho-D-ribosyl)glycinamide: step 2/2. This is Phosphoribosylformylglycinamidine cyclo-ligase from Cupriavidus pinatubonensis (strain JMP 134 / LMG 1197) (Cupriavidus necator (strain JMP 134)).